The chain runs to 69 residues: Probable molybdenum-pterin-binding protein (69 aa).

Positions 2 to 68 (KISARNQLKG…IKATSVMVGV (67 aa)) constitute a Mop domain.

It to C.pasteurianum MOP proteins.

In terms of biological role, binds one mole of molybdenum per mole of protein and contains a pterin. In Haemophilus influenzae (strain ATCC 51907 / DSM 11121 / KW20 / Rd), this protein is Probable molybdenum-pterin-binding protein.